The following is a 316-amino-acid chain: CD276 antigen (316 aa).

The first 28 residues, 1–28 (MLRGWGGPSVGVSMGTALGVLCLCLTGA), serve as a signal peptide directing secretion. Positions 29–139 (VEVQVSEDPV…DSAAVSLQVA (111 aa)) constitute an Ig-like V-type domain. Over 29 to 248 (VEVQVSEDPV…GQPMTFPPEA (220 aa)) the chain is Extracellular. Asparagine 104, asparagine 189, and asparagine 215 each carry an N-linked (GlcNAc...) asparagine glycan. Residues 145-238 (PSMTLEPNKD…QDAHGSVTIT (94 aa)) form the Ig-like C2-type domain. A disulfide bridge links cysteine 165 with cysteine 220. Residues 249-269 (LWVTVGLSVCLVILLVALAFV) traverse the membrane as a helical segment. Residues 270 to 316 (CWRKIKQSCEEENAGAEDQDGDGEGSKTALRPLKHSENKEDDGQEIA) lie on the Cytoplasmic side of the membrane. The span at 281 to 292 (ENAGAEDQDGDG) shows a compositional bias: acidic residues. The interval 281–316 (ENAGAEDQDGDGEGSKTALRPLKHSENKEDDGQEIA) is disordered.

It belongs to the immunoglobulin superfamily. BTN/MOG family. As to quaternary structure, interacts with TREML2 and this interaction enhances T-cell activation.

It localises to the membrane. Functionally, modulates T-cell-mediated immune responses and the development of acute and chronic transplant rejection. May play a positive regulatory role in bone formation and has a dual role in the bone-immune interface. Induces antitumor immunity as it activates both acquired and innate immunity leading to natural killer cell and CD8 T-cell dependent killing of tumor cells. This chain is CD276 antigen (Cd276), found in Rattus norvegicus (Rat).